Reading from the N-terminus, the 392-residue chain is Phosphopentomutase (392 aa).

Mn(2+)-binding residues include D14, D286, H291, D327, H328, and H339.

This sequence belongs to the phosphopentomutase family. It depends on Mn(2+) as a cofactor.

It is found in the cytoplasm. It catalyses the reaction 2-deoxy-alpha-D-ribose 1-phosphate = 2-deoxy-D-ribose 5-phosphate. The catalysed reaction is alpha-D-ribose 1-phosphate = D-ribose 5-phosphate. Its pathway is carbohydrate degradation; 2-deoxy-D-ribose 1-phosphate degradation; D-glyceraldehyde 3-phosphate and acetaldehyde from 2-deoxy-alpha-D-ribose 1-phosphate: step 1/2. In terms of biological role, isomerase that catalyzes the conversion of deoxy-ribose 1-phosphate (dRib-1-P) and ribose 1-phosphate (Rib-1-P) to deoxy-ribose 5-phosphate (dRib-5-P) and ribose 5-phosphate (Rib-5-P), respectively. This is Phosphopentomutase from Staphylococcus aureus (strain Mu3 / ATCC 700698).